The chain runs to 1706 residues: Serine/threonine-protein kinase vps15 (1706 aa).

The region spanning 24-293 (YHNERSLGDS…YLQKYRGTVF (270 aa)) is the Protein kinase domain. ATP is bound by residues 30–38 (LGDSHFLRT) and K52. The HEAT 1 repeat unit spans residues 56–94 (NKLPEISLSSIVNLLKEEQENISYRVPNAVPYIKTLVTL). D146 serves as the catalytic Proton acceptor. 7 HEAT repeats span residues 426 to 465 (LYGA…NICD), 466 to 504 (ESKL…NVTS), 511 to 549 (FLFQ…QASK), 587 to 625 (HDLV…FFGK), 626 to 664 (AKSN…FIGP), 665 to 703 (RSVD…LHLF), and 705 to 743 (KLVV…SFDD). Phosphoserine is present on S957. Y958 carries the phosphotyrosine modification. Residues 982–1099 (TTKPKDVSQS…GKSLAPLISS (118 aa)) are disordered. Composition is skewed to basic and acidic residues over residues 984 to 1002 (KPKD…RESN) and 1014 to 1023 (DVYRQTDNPE). The span at 1029-1055 (DTASSKVDTHNPTVTQPTDDTGGLNSY) shows a compositional bias: polar residues. Residues 1056–1069 (NTENPLLTNNTLEP) are compositionally biased toward low complexity. The segment covering 1079–1090 (KDSDKHAKESKG) has biased composition (basic and acidic residues). WD repeat units lie at residues 1213-1252 (LLDG…RHIS) and 1368-1407 (LQCG…LSCS). Residues 1431 to 1442 (NEYTSGNNNSPV) are compositionally biased toward polar residues. The tract at residues 1431 to 1461 (NEYTSGNNNSPVTKVPGSSSTSSSSTQPINS) is disordered. The WD 3 repeat unit spans residues 1577 to 1622 (CISSPIYRYRGPSAGSVEREPLFLIAASGSPHAFIWNPHNVSASSS).

The protein belongs to the protein kinase superfamily. Ser/Thr protein kinase family. As to quaternary structure, component of the autophagy-specific vps34 PI3-kinase complex I composed of vps15, atg6, pik3/vps34, atg14 and atg38. Also a component of the vps34 PI3-kinase complex II composed of atg6, pik3, vps15 and vps38.

It catalyses the reaction L-seryl-[protein] + ATP = O-phospho-L-seryl-[protein] + ADP + H(+). The enzyme catalyses L-threonyl-[protein] + ATP = O-phospho-L-threonyl-[protein] + ADP + H(+). Functionally, functions as a part of the autophagy-specific VPS34 PI3-kinase complex I that plays a role in autophagosome assembly. This complex is essential to recruit the atg8-phosphatidylinositol conjugate and the atg12-atg5 conjugate to the pre-autophagosomal structure. Also functions as part of the VPS34 PI3-kinase complex II. This Schizosaccharomyces pombe (strain 972 / ATCC 24843) (Fission yeast) protein is Serine/threonine-protein kinase vps15.